A 972-amino-acid chain; its full sequence is Aminopeptidase N (972 aa).

At 2–17 (TSQGRTRTLLNLTPIR) the chain is on the cytoplasmic side. The helical; Signal-anchor for type II membrane protein transmembrane segment at 18–39 (LIVALFLVAAAVGLSIGLTYYF) threads the bilayer. Residues 40-972 (TRKAFDTSEK…LAAFFKKATL (933 aa)) lie on the Extracellular side of the membrane. Residues 47–62 (SEKPGKDDTGGKDKDN) show a composition bias toward basic and acidic residues. The interval 47–66 (SEKPGKDDTGGKDKDNSPSA) is disordered. A glycan (N-linked (GlcNAc...) asparagine) is linked at Asn99. Position 208 (Glu208) interacts with substrate. N-linked (GlcNAc...) asparagine glycosylation occurs at Asn227. 343 to 347 (GAMEN) contacts substrate. His379 serves as a coordination point for Zn(2+). Glu380 functions as the Proton acceptor in the catalytic mechanism. Positions 383 and 402 each coordinate Zn(2+). A glycan (N-linked (GlcNAc...) asparagine) is linked at Asn549. Cystine bridges form between Cys759/Cys766 and Cys804/Cys840. Asn858 is a glycosylation site (N-linked (GlcNAc...) asparagine).

Belongs to the peptidase M1 family. Zn(2+) is required as a cofactor.

Its subcellular location is the membrane. It catalyses the reaction Release of an N-terminal amino acid, Xaa-|-Yaa- from a peptide, amide or arylamide. Xaa is preferably Ala, but may be most amino acids including Pro (slow action). When a terminal hydrophobic residue is followed by a prolyl residue, the two may be released as an intact Xaa-Pro dipeptide.. This Haemonchus contortus (Barber pole worm) protein is Aminopeptidase N.